The sequence spans 6857 residues: Replicase polyprotein 1ab (6857 aa).

The region spanning 1679–1860 is the Macro domain; the sequence is FEQYYEFKIG…QYNQAFAVIK (182 aa). The interval 2158–2191 is disordered; sequence QVGQGGQQDGQVDQQIKESEQVVEPSAPSGQESP. Helical transmembrane passes span 2303–2323, 2330–2350, 2385–2405, 2535–2555, 2639–2659, 2664–2684, 2889–2909, 3057–3077, 3106–3126, and 3142–3162; these read LTYN…FGVL, TPFY…LMIW, LVQW…DYVV, LFYS…YVLF, VTVS…VVVL, FIWF…IILF, TTLV…LMVG, IISP…FLIL, VLFV…LALW, and LFIL…GFVF. Residues 2303 to 2683 form an HD1 region; sequence LTYNIKFKLI…VMMPVFVIIL (381 aa). The segment at 2889-3162 is HD2; that stretch reads TTLVIVMGVL…FLFMVGGFVF (274 aa). Catalysis depends on charge relay system; for 3C-like serine proteinase activity residues His3304, Glu3347, and Ser3416. Positions 3555 to 3738 are HD3; sequence HLHFIFSIYF…IVIVLSFRVF (184 aa). The next 7 membrane-spanning stretches (helical) occupy residues 3556-3575, 3580-3602, 3611-3631, 3640-3660, 3663-3683, 3698-3718, and 3723-3738; these read LHFI…YWWL, SVVL…NVLF, LAVT…LGFL, SLII…VVNV, AIFV…LGIV, AVFT…LLLF, and LMSF…FRVF. The 232-residue stretch at 4566 to 4797 folds into the NiRAN domain; sequence DFKLLRGAWS…ANEMEIPTDY (232 aa). In terms of domain architecture, RdRp catalytic spans 5105-5256; sequence FDVFGSDYTK…FSKPEALKIF (152 aa). Residues 5413 to 5528 form the CV ZBD domain; it reads FDKVCFCCPN…NGVAQLLTSV (116 aa). Positions 5417, 5420, 5428, 5431, 5438, 5441, 5445, 5451, 5460, 5462, 5483, and 5486 each coordinate Zn(2+). One can recognise a (+)RNA virus helicase ATP-binding domain in the interval 5633 to 5812; sequence NQPWRLATCF…LQLATQKRYL (180 aa). One can recognise a (+)RNA virus helicase C-terminal domain in the interval 5813 to 5972; that stretch reads TACYRCPPQI…FGMEKQSDFN (160 aa). The ExoN domain occupies 5970 to 6183; the sequence is DFNIIPEVSS…YLASYEAAFK (214 aa). Catalysis depends on residues Asp5984, Glu5986, and Asp6085. The Zn(2+) site is built by His6149, Cys6153, and His6157. Active-site residues include His6161 and Asp6166. Cys6172 is a binding site for Zn(2+). One can recognise a NendoU domain in the interval 6451–6591; sequence LPDTLFSTGR…GEDDIQTFYP (141 aa). Catalysis depends on residues His6487, His6504, Lys6536, Lys6633, Asp6709, Lys6737, and Glu6771. Residues 6593-6857 form the Nidovirus-type SAM-dependent 2'-O-MTase domain; sequence KDFVRSYYEW…EVPMLCQMEH (265 aa).

Post-translationally, specific enzymatic cleavages in vivo by its own protease yield mature proteins. 3CL-PRO is autocatalytically processed.

It localises to the host membrane. It carries out the reaction RNA(n) + a ribonucleoside 5'-triphosphate = RNA(n+1) + diphosphate. It catalyses the reaction ATP + H2O = ADP + phosphate + H(+). In terms of biological role, the 3C-like serine proteinase is responsible for the majority of cleavages. The helicase which contains a zinc finger structure displays RNA and DNA duplex-unwinding activities with 5' to 3' polarity. Functionally, acts on both ssRNA and dsRNA in a 3' to 5' direction. Its function is as follows. NendoU is a Mn(2+)-dependent, uridylate-specific enzyme, which leaves 2'-3'-cyclic phosphates 5' to the cleaved bond. The sequence is that of Replicase polyprotein 1ab (rep) from Equus caballus (Horse).